Consider the following 132-residue polypeptide: Ribosome-binding factor A (132 aa).

This sequence belongs to the RbfA family. Monomer. Binds 30S ribosomal subunits, but not 50S ribosomal subunits or 70S ribosomes.

Its subcellular location is the cytoplasm. One of several proteins that assist in the late maturation steps of the functional core of the 30S ribosomal subunit. Associates with free 30S ribosomal subunits (but not with 30S subunits that are part of 70S ribosomes or polysomes). Required for efficient processing of 16S rRNA. May interact with the 5'-terminal helix region of 16S rRNA. The polypeptide is Ribosome-binding factor A (Pseudomonas putida (strain GB-1)).